Consider the following 426-residue polypeptide: Enolase 1 (426 aa).

Gln-162 lines the (2R)-2-phosphoglycerate pocket. The active-site Proton donor is Glu-204. Positions 241, 284, and 311 each coordinate Mg(2+). Lys-336, Arg-365, Ser-366, and Lys-387 together coordinate (2R)-2-phosphoglycerate. Lys-336 (proton acceptor) is an active-site residue.

This sequence belongs to the enolase family. The cofactor is Mg(2+).

It localises to the cytoplasm. Its subcellular location is the secreted. The protein resides in the cell surface. The catalysed reaction is (2R)-2-phosphoglycerate = phosphoenolpyruvate + H2O. It functions in the pathway carbohydrate degradation; glycolysis; pyruvate from D-glyceraldehyde 3-phosphate: step 4/5. Its function is as follows. Catalyzes the reversible conversion of 2-phosphoglycerate (2-PG) into phosphoenolpyruvate (PEP). It is essential for the degradation of carbohydrates via glycolysis. The sequence is that of Enolase 1 from Methanospirillum hungatei JF-1 (strain ATCC 27890 / DSM 864 / NBRC 100397 / JF-1).